The chain runs to 689 residues: Glycine--tRNA ligase beta subunit (689 aa).

The protein belongs to the class-II aminoacyl-tRNA synthetase family. Tetramer of two alpha and two beta subunits.

It localises to the cytoplasm. The catalysed reaction is tRNA(Gly) + glycine + ATP = glycyl-tRNA(Gly) + AMP + diphosphate. The protein is Glycine--tRNA ligase beta subunit of Acinetobacter baumannii (strain ATCC 17978 / DSM 105126 / CIP 53.77 / LMG 1025 / NCDC KC755 / 5377).